The chain runs to 179 residues: Ribosome maturation factor RimM (179 aa).

The 79-residue stretch at 101-179 (EGEVYVHDLC…VELMHRWILE (79 aa)) folds into the PRC barrel domain.

This sequence belongs to the RimM family. Binds ribosomal protein uS19.

It localises to the cytoplasm. An accessory protein needed during the final step in the assembly of 30S ribosomal subunit, possibly for assembly of the head region. Essential for efficient processing of 16S rRNA. May be needed both before and after RbfA during the maturation of 16S rRNA. It has affinity for free ribosomal 30S subunits but not for 70S ribosomes. The sequence is that of Ribosome maturation factor RimM from Treponema denticola (strain ATCC 35405 / DSM 14222 / CIP 103919 / JCM 8153 / KCTC 15104).